The following is a 271-amino-acid chain: Regulatory protein RecX (271 aa).

This sequence belongs to the RecX family.

The protein localises to the cytoplasm. In terms of biological role, modulates RecA activity. This chain is Regulatory protein RecX, found in Lactobacillus gasseri (strain ATCC 33323 / DSM 20243 / BCRC 14619 / CIP 102991 / JCM 1131 / KCTC 3163 / NCIMB 11718 / NCTC 13722 / AM63).